The primary structure comprises 368 residues: 2-deoxy-scyllo-inosose synthase (368 aa).

NAD(+) contacts are provided by residues aspartate 42, 72-75, 104-108, 128-129, 139-141, 150-151, and glutamine 176; these read EEYK, GLTGN, TT, SIK, and KN. Lysine 141 is a catalytic residue. Glutamate 183 contributes to the Co(2+) binding site. Residue glutamate 243 is part of the active site. 2 residues coordinate Co(2+): histidine 246 and histidine 262.

Belongs to the sugar phosphate cyclases superfamily. DOI synthase family. As to quaternary structure, was isolated as a heterodimeric enzyme comprising of BtrC and a smaller polypeptide further identified as PdxT by sequence homology. Homodimer in solution. The cofactor is NAD(+). Requires Co(2+) as cofactor.

The enzyme catalyses D-glucose 6-phosphate = 2-deoxy-L-scyllo-inosose + phosphate. The protein operates within metabolic intermediate biosynthesis; 2-deoxystreptamine biosynthesis; 2-deoxystreptamine from D-glucose 6-phosphate: step 1/4. It participates in antibiotic biosynthesis; butirosin biosynthesis. Strongly inhibited by EDTA, zinc and Cu(2+). Its function is as follows. Catalyzes the intramolecular carbocycle formation from D-glucose-6-phosphate to 2-deoxy-scyllo-inosose (DOI). The sequence is that of 2-deoxy-scyllo-inosose synthase (btrC) from Niallia circulans (Bacillus circulans).